A 35-amino-acid chain; its full sequence is Cecropin-A (35 aa).

Leucine 35 is subject to Leucine amide.

As to quaternary structure, monomer. In terms of tissue distribution, hemolymph.

It localises to the secreted. In terms of biological role, cecropins have lytic and antibacterial activity against several Gram-positive and Gram-negative bacteria. Also has activity against fungi. This is Cecropin-A from Heliothis virescens (Tobacco budworm moth).